A 156-amino-acid chain; its full sequence is Endoribonuclease YbeY (156 aa).

The Zn(2+) site is built by H119, H123, and H129.

It belongs to the endoribonuclease YbeY family. Requires Zn(2+) as cofactor.

Its subcellular location is the cytoplasm. Functionally, single strand-specific metallo-endoribonuclease involved in late-stage 70S ribosome quality control and in maturation of the 3' terminus of the 16S rRNA. The sequence is that of Endoribonuclease YbeY from Buchnera aphidicola subsp. Cinara cedri (strain Cc).